Reading from the N-terminus, the 398-residue chain is RNA-binding protein rnc1 (398 aa).

A disordered region spans residues 40 to 78 (KVSIPTPKPSTPLSTLTNGSTIQQSMTNQPEPTSQVPPI). Thr-50 is subject to Phosphothreonine. Residues 57-76 (NGSTIQQSMTNQPEPTSQVP) show a composition bias toward polar residues. KH domains are found at residues 93 to 157 (QLTL…YRFI) and 178 to 243 (PRKL…IWEI). Positions 274–290 (ASTASPQQVSPPAAPST) are enriched in low complexity. The disordered stretch occupies residues 274 to 295 (ASTASPQQVSPPAAPSTTSGEA). Positions 320 to 385 (KVTQNISIPA…EENEKALFLL (66 aa)) constitute a KH 3 domain.

Post-translationally, phosphorylated by pmk1. Phosphorylation causes enhancement of the RNA-binding activity.

The protein resides in the cytoplasm. In terms of biological role, binds and stabilizes pmp1 mRNA and hence acts as a negative regulator of pmk1 signaling. Overexpression suppresses the Cl(-) sensitivity of calcineurin deletion. The polypeptide is RNA-binding protein rnc1 (Schizosaccharomyces pombe (strain 972 / ATCC 24843) (Fission yeast)).